The primary structure comprises 200 residues: Recombination protein RecR (200 aa).

The C4-type zinc-finger motif lies at 57–72 (CSHCRTFTENERCEIC). Residues 81 to 176 (GLLCVVESPA…KVSRIAHGVP (96 aa)) enclose the Toprim domain.

It belongs to the RecR family.

May play a role in DNA repair. It seems to be involved in an RecBC-independent recombinational process of DNA repair. It may act with RecF and RecO. This chain is Recombination protein RecR, found in Aeromonas hydrophila subsp. hydrophila (strain ATCC 7966 / DSM 30187 / BCRC 13018 / CCUG 14551 / JCM 1027 / KCTC 2358 / NCIMB 9240 / NCTC 8049).